We begin with the raw amino-acid sequence, 269 residues long: Type II iodothyronine deiodinase (269 aa).

Residues 1 to 7 (MGLLSVD) are Lumenal-facing. Residues 8–28 (LLITLQILPWFFSNCLFLALY) traverse the membrane as a helical; Signal-anchor for type III membrane protein segment. Over 29–269 (DSVVLLKHVI…RUVPTCELIM (241 aa)) the chain is Cytoplasmic. Selenocysteine 128 is an active-site residue. Residues selenocysteine 128 and selenocysteine 261 are each a non-standard amino acid (selenocysteine).

Belongs to the iodothyronine deiodinase family. As to quaternary structure, predominantly monomer. Can form homodimers but homodimerization is not essential for enzyme activity.

The protein localises to the endoplasmic reticulum membrane. It catalyses the reaction 3,3',5-triiodo-L-thyronine + iodide + A + H(+) = L-thyroxine + AH2. It carries out the reaction 3,3'-diiodo-L-thyronine + iodide + A + H(+) = 3,3',5'-triiodo-L-thyronine + AH2. The catalysed reaction is 3'-iodo-L-thyronine + iodide + A + H(+) = 3',5'-diiodo-L-thyronine + AH2. The enzyme catalyses 3,3'-diiodothyronamine + iodide + A + H(+) = 3,3',5'-triiodothyronamine + AH2. It catalyses the reaction 3'-iodothyronamine + iodide + A + H(+) = 3',5'-diiodothyronamine + AH2. In terms of biological role, plays a crucial role in the metabolism of thyroid hormones (TH) and has specific roles in TH activation and inactivation by deiodination. Catalyzes the deiodination of L-thyroxine (T4) to 3,5,3'-triiodothyronine (T3), 3,3',5'-triiodothyronine (rT3) to 3,3'-diiodothyronine (3,3'-T2) and 3',5'-diiodothyronine (3',5'-T2) to 3'-monoiodothyronine (3'-T1) via outer-ring deiodination (ORD). Catalyzes the phenolic ring deiodinations of 3,3',5'-triiodothyronamine and 3',5'- diiodothyronamine. This is Type II iodothyronine deiodinase (dio2) from Neoceratodus forsteri (Australian lungfish).